A 244-amino-acid chain; its full sequence is Ribosome maturation factor RimM (244 aa).

The tract at residues 1–58 (MSERDSGSSGPVKAKAAAPRAKTSGQAPFGAFVRKPVEKTEGKAKANAANAGSGATEM) is disordered. Over residues 13-22 (KAKAAAPRAK) the composition is skewed to low complexity. Over residues 35-44 (KPVEKTEGKA) the composition is skewed to basic and acidic residues. Over residues 45 to 57 (KANAANAGSGATE) the composition is skewed to low complexity. Residues 163–244 (ADEFYWVDLL…QITVDWEADY (82 aa)) enclose the PRC barrel domain.

This sequence belongs to the RimM family. In terms of assembly, binds ribosomal protein uS19.

It is found in the cytoplasm. An accessory protein needed during the final step in the assembly of 30S ribosomal subunit, possibly for assembly of the head region. Essential for efficient processing of 16S rRNA. May be needed both before and after RbfA during the maturation of 16S rRNA. It has affinity for free ribosomal 30S subunits but not for 70S ribosomes. This Paraburkholderia xenovorans (strain LB400) protein is Ribosome maturation factor RimM.